We begin with the raw amino-acid sequence, 506 residues long: (+)-piperitol/(+)-sesamin synthase CYP81Q2 (506 aa).

A helical membrane pass occupies residues 3-23 (AEMLYSALALTFAIFMVYRIL). Residue C439 participates in heme binding.

Belongs to the cytochrome P450 family. Heme is required as a cofactor. Expressed in seeds.

It localises to the membrane. The enzyme catalyses (+)-piperitol + reduced [NADPH--hemoprotein reductase] + O2 = (+)-sesamin + oxidized [NADPH--hemoprotein reductase] + 2 H2O + H(+). It catalyses the reaction (+)-pinoresinol + reduced [NADPH--hemoprotein reductase] + O2 = (+)-piperitol + oxidized [NADPH--hemoprotein reductase] + 2 H2O + H(+). In terms of biological role, involved in the biosynthesis of (+)-sesamin, a furofuran class lignan. Functions in a dual catalytic mode. Catalyzes the synthesis of (+)-sesamin from (+)- pinoresinol by formation of two successive methylenedioxy bridges on (+)-pinoresinol and (+)-piperitol, respectively. The sequence is that of (+)-piperitol/(+)-sesamin synthase CYP81Q2 from Sesamum radiatum (Black benniseed).